A 198-amino-acid chain; its full sequence is Phosphoheptose isomerase (198 aa).

Residues 36–198 (MARALGADRK…DRTLFGGPGG (163 aa)) enclose the SIS domain. 51–53 (NGG) is a binding site for substrate. Zn(2+)-binding residues include His60 and Glu64. Residues Glu64, 93 to 94 (ND), 119 to 121 (STS), Ser124, and Gln174 each bind substrate. Zn(2+) is bound by residues Gln174 and His182.

This sequence belongs to the SIS family. GmhA subfamily. Homotetramer. Zn(2+) is required as a cofactor.

The protein localises to the cytoplasm. It carries out the reaction 2 D-sedoheptulose 7-phosphate = D-glycero-alpha-D-manno-heptose 7-phosphate + D-glycero-beta-D-manno-heptose 7-phosphate. Its pathway is carbohydrate biosynthesis; D-glycero-D-manno-heptose 7-phosphate biosynthesis; D-glycero-alpha-D-manno-heptose 7-phosphate and D-glycero-beta-D-manno-heptose 7-phosphate from sedoheptulose 7-phosphate: step 1/1. Functionally, catalyzes the isomerization of sedoheptulose 7-phosphate in D-glycero-D-manno-heptose 7-phosphate. In Halorhodospira halophila (strain DSM 244 / SL1) (Ectothiorhodospira halophila (strain DSM 244 / SL1)), this protein is Phosphoheptose isomerase.